Here is a 165-residue protein sequence, read N- to C-terminus: Lipoprotein signal peptidase (165 aa).

Helical transmembrane passes span 6–26 (SSVEIGDSMIYIFLFLILLII), 68–88 (GKIDIVSILAVIAIGLILFYF), and 95–115 (ISFLERIAYTMIFSGAIGNMI). Residues Asp125 and Asp141 contribute to the active site. A helical membrane pass occupies residues 132 to 152 (IWSFIFNFADVWINIGVVLII).

Belongs to the peptidase A8 family.

The protein localises to the cell inner membrane. It catalyses the reaction Release of signal peptides from bacterial membrane prolipoproteins. Hydrolyzes -Xaa-Yaa-Zaa-|-(S,diacylglyceryl)Cys-, in which Xaa is hydrophobic (preferably Leu), and Yaa (Ala or Ser) and Zaa (Gly or Ala) have small, neutral side chains.. It functions in the pathway protein modification; lipoprotein biosynthesis (signal peptide cleavage). In terms of biological role, this protein specifically catalyzes the removal of signal peptides from prolipoproteins. The polypeptide is Lipoprotein signal peptidase (Fusobacterium nucleatum subsp. nucleatum (strain ATCC 25586 / DSM 15643 / BCRC 10681 / CIP 101130 / JCM 8532 / KCTC 2640 / LMG 13131 / VPI 4355)).